The chain runs to 358 residues: Phospho-N-acetylmuramoyl-pentapeptide-transferase (358 aa).

10 consecutive transmembrane segments (helical) span residues 19 to 39 (YLTLRAILSTLTALLIAVLIG), 71 to 91 (TMGGLLILAAIVVSVLLWADL), 95 to 115 (YVWVTLSVVVGYGIIGFIDDY), 126 to 146 (LIARWKYFWQSVIAIGVALYL), 166 to 186 (VMPQMGMFFVVMTYFVIVGTS), 194 to 214 (GLDGLAIVPTVLVAGAFAIFA), 237 to 257 (LVIVCTAIVGAGLGFLWFNTY), 261 to 281 (VFMGDVGSLALGGTLGIIAVL), 286 to 306 (IVLVIMGGVFVVETLSVILQV), and 336 to 356 (VIVRFWIISIILVLVGLATLK).

It belongs to the glycosyltransferase 4 family. MraY subfamily. Mg(2+) is required as a cofactor.

It is found in the cell inner membrane. It catalyses the reaction UDP-N-acetyl-alpha-D-muramoyl-L-alanyl-gamma-D-glutamyl-meso-2,6-diaminopimeloyl-D-alanyl-D-alanine + di-trans,octa-cis-undecaprenyl phosphate = di-trans,octa-cis-undecaprenyl diphospho-N-acetyl-alpha-D-muramoyl-L-alanyl-D-glutamyl-meso-2,6-diaminopimeloyl-D-alanyl-D-alanine + UMP. Its pathway is cell wall biogenesis; peptidoglycan biosynthesis. Functionally, catalyzes the initial step of the lipid cycle reactions in the biosynthesis of the cell wall peptidoglycan: transfers peptidoglycan precursor phospho-MurNAc-pentapeptide from UDP-MurNAc-pentapeptide onto the lipid carrier undecaprenyl phosphate, yielding undecaprenyl-pyrophosphoryl-MurNAc-pentapeptide, known as lipid I. This chain is Phospho-N-acetylmuramoyl-pentapeptide-transferase, found in Pseudoalteromonas atlantica (strain T6c / ATCC BAA-1087).